Consider the following 259-residue polypeptide: DNA utilization protein HofM (259 aa).

Required for the use of extracellular DNA as a nutrient. The protein is DNA utilization protein HofM (hofM) of Escherichia coli (strain K12).